Here is a 181-residue protein sequence, read N- to C-terminus: UPF0398 protein lmo1889 (181 aa).

The protein belongs to the UPF0398 family.

The polypeptide is UPF0398 protein lmo1889 (Listeria monocytogenes serovar 1/2a (strain ATCC BAA-679 / EGD-e)).